The chain runs to 618 residues: 1-deoxy-D-xylulose-5-phosphate synthase (618 aa).

Thiamine diphosphate-binding positions include H73 and 114 to 116 (GHS). D145 contacts Mg(2+). Thiamine diphosphate-binding positions include 146-147 (GA), N174, Y284, and E364. N174 lines the Mg(2+) pocket.

The protein belongs to the transketolase family. DXPS subfamily. In terms of assembly, homodimer. It depends on Mg(2+) as a cofactor. Thiamine diphosphate is required as a cofactor.

The catalysed reaction is D-glyceraldehyde 3-phosphate + pyruvate + H(+) = 1-deoxy-D-xylulose 5-phosphate + CO2. It participates in metabolic intermediate biosynthesis; 1-deoxy-D-xylulose 5-phosphate biosynthesis; 1-deoxy-D-xylulose 5-phosphate from D-glyceraldehyde 3-phosphate and pyruvate: step 1/1. Functionally, catalyzes the acyloin condensation reaction between C atoms 2 and 3 of pyruvate and glyceraldehyde 3-phosphate to yield 1-deoxy-D-xylulose-5-phosphate (DXP). The protein is 1-deoxy-D-xylulose-5-phosphate synthase of Clostridium beijerinckii (strain ATCC 51743 / NCIMB 8052) (Clostridium acetobutylicum).